A 315-amino-acid chain; its full sequence is Olfactory receptor 8J3 (315 aa).

The Extracellular segment spans residues 1-25; it reads MAPENFTRVTEFILTGVSSCPELQI. N5 carries N-linked (GlcNAc...) asparagine glycosylation. Residues 26–46 traverse the membrane as a helical segment; sequence PLFLVFLVLYVLTMAGNLGII. Residues 47–54 lie on the Cytoplasmic side of the membrane; sequence TLTSVDSR. The helical transmembrane segment at 55–75 threads the bilayer; that stretch reads LQNPMYFFLRHLAIINLGNST. Over 76–99 the chain is Extracellular; it reads VIAPKMLMNFLVKKKTTSFYECAT. C97 and C189 are oxidised to a cystine. The helical transmembrane segment at 100-120 threads the bilayer; sequence QLGGFLFFIVSEVMMLAVMAY. At 121 to 139 the chain is on the cytoplasmic side; the sequence is DRYVAICNPLLYMVVVSRR. A helical transmembrane segment spans residues 140–160; it reads LCLLLVSLTYLYGFSTAIVVS. The Extracellular portion of the chain corresponds to 161–197; sequence PCIFSVSYCSSNIINHFYCDIAPLLALSCSDTYIPET. Residues 198–217 form a helical membrane-spanning segment; sequence IVFISAATNLVFSMITVLVS. The Cytoplasmic portion of the chain corresponds to 218-237; the sequence is YFNIVLSILRIRSPEGRKKA. Residues 238 to 258 form a helical membrane-spanning segment; it reads FSTCASHMIAVTVFYGTMLFM. Topologically, residues 259-271 are extracellular; that stretch reads YLQPQTNHSLDTD. N265 carries an N-linked (GlcNAc...) asparagine glycan. Residues 272–292 form a helical membrane-spanning segment; it reads KMASVFYTLVIPMLNPLIYSL. Residues 293 to 315 lie on the Cytoplasmic side of the membrane; it reads RNNDVNVALKKFMENPCYSFKSM.

It belongs to the G-protein coupled receptor 1 family.

Its subcellular location is the cell membrane. Functionally, odorant receptor. The protein is Olfactory receptor 8J3 (OR8J3) of Homo sapiens (Human).